We begin with the raw amino-acid sequence, 57 residues long: Large ribosomal subunit protein bL32 (57 aa).

This sequence belongs to the bacterial ribosomal protein bL32 family.

This Bacillus pumilus (strain SAFR-032) protein is Large ribosomal subunit protein bL32.